The chain runs to 214 residues: uncharacterized protein (214 aa).

5 helical membrane-spanning segments follow: residues 18–38, 51–71, 80–100, 108–128, and 145–165; these read LLLL…NTFV, DLAL…IVAG, ILVL…VLLV, LLVL…AFNV, and FFGV…GYII.

It localises to the cell membrane. This is an uncharacterized protein from Geobacillus stearothermophilus (Bacillus stearothermophilus).